We begin with the raw amino-acid sequence, 597 residues long: Kelch-like protein 21 (597 aa).

One can recognise a BTB domain in the interval 35-103 (LDVTLEAAGG…SYTGRVAVSG (69 aa)). Positions 138–239 (CLDMQDFAEA…RRFYLLAHVE (102 aa)) constitute a BACK domain. Kelch repeat units follow at residues 287–335 (ILVL…ALGN), 336–382 (DIYV…VLDG), 384–422 (LYVVAADSTERYDHTTDSWEALQPMTYPMDNCSTTACRG), 424–463 (LYAIGSLAGKETMVMQCYHPDMDLWSLVDCGQLPPWSFAP), 464–512 (KTVT…VLGG), and 513–560 (KLYV…SIFR). A disordered region spans residues 570 to 597 (GRGFELDGGSSDMDVGQPRPPQNPAELH). Pro residues predominate over residues 587–597 (PRPPQNPAELH).

As to quaternary structure, component of the BCR(KLHL21) E3 ubiquitin ligase complex, at least composed of CUL3, KLHL21 and RBX1.

It is found in the cytoplasm. The protein localises to the cytoskeleton. The protein resides in the spindle. It participates in protein modification; protein ubiquitination. Substrate-specific adapter of a BCR (BTB-CUL3-RBX1) E3 ubiquitin-protein ligase complex required for efficient chromosome alignment and cytokinesis. The BCR(KLHL21) E3 ubiquitin ligase complex regulates localization of the chromosomal passenger complex (CPC) from chromosomes to the spindle midzone in anaphase and mediates the ubiquitination of AURKB. Ubiquitination of AURKB by BCR(KLHL21) E3 ubiquitin ligase complex may not lead to its degradation by the proteasome. This chain is Kelch-like protein 21 (KLHL21), found in Bos taurus (Bovine).